The chain runs to 429 residues: C4-dicarboxylate transport protein (429 aa).

8 consecutive transmembrane segments (helical) span residues 9-29 (VLYVQVIFAIIVGVILGHYYP), 45-65 (LIKMVIGPIIFCTVVTGIAGM), 79-99 (LLYFEIVSTFALLLGLAATHI), 149-169 (GEILQILLIALLFGSVLAHLG), 185-205 (VLFGIVHIVTKLAPIGAFGAM), 223-243 (LIGTFYLTSVVFVLVVLGTIA), 308-328 (IYMTMAVLFIAQATNIELTWM), and 356-376 (AATLAVVPTIPLSGMVLILGI).

Belongs to the dicarboxylate/amino acid:cation symporter (DAACS) (TC 2.A.23) family.

The protein resides in the cell inner membrane. Its function is as follows. Responsible for the transport of dicarboxylates such as succinate, fumarate, and malate from the periplasm across the membrane. The polypeptide is C4-dicarboxylate transport protein (Burkholderia lata (strain ATCC 17760 / DSM 23089 / LMG 22485 / NCIMB 9086 / R18194 / 383)).